Here is a 668-residue protein sequence, read N- to C-terminus: Probable metal-nicotianamine transporter YSL5 (668 aa).

The segment covering 1–11 (MPPPETSSAAA) has biased composition (low complexity). Positions 1 to 22 (MPPPETSSAAAPSPPSPDPLPP) are disordered. A compositionally biased stretch (pro residues) spans 12–22 (PSPPSPDPLPP). 14 helical membrane-spanning segments follow: residues 27–47 (LTLRGVAVAAVLGSLLCVVIH), 51–71 (LTVGVIPALNVASGLLAFFLA), 102–122 (CAIACGSLAFSGCSSSYIFAM), 147–167 (LGWMIGFMFLIALIGPFSIVM), 209–229 (LVKYMSLSFGWSFFKWFFSGV), 268–288 (IVNCSVFLGSVISWGFLWPFI), 315–335 (IAISVILGDGLYNLVKVFLII), 383–403 (LAVSGYIVLAAISTVAVPIIF), 410–430 (LVLVCYFLAPAIAFCNSYGMG), 443–463 (IALFVFASLVGSDGGVIAGLA), 501–521 (IGVALGCIIAPLTLWLFWTAF), 557–577 (LEICCVFFLAALIINLMKDVV), 595–615 (FYIGAYFGVDMFIGTLILFAW), and 633–653 (GLICGDGVWSIPSAVLSILGV).

Belongs to the YSL (TC 2.A.67.2) family. Expressed in roots.

It localises to the membrane. In terms of biological role, may be involved in the transport of nicotianamine-chelated metals. This Oryza sativa subsp. japonica (Rice) protein is Probable metal-nicotianamine transporter YSL5 (YSL5).